The sequence spans 434 residues: Eukaryotic translation initiation factor 3 subunit E (434 aa).

In terms of domain architecture, PCI spans 219 to 392 (FFNHPKGRDL…GHVVMGTQPL (174 aa)).

This sequence belongs to the eIF-3 subunit E family. In terms of assembly, component of the eukaryotic translation initiation factor 3 (eIF-3) complex. The eIF-3 complex interacts with pix. Interacts with mxt.

Its subcellular location is the cytoplasm. In terms of biological role, component of the eukaryotic translation initiation factor 3 (eIF-3) complex, which is involved in protein synthesis of a specialized repertoire of mRNAs and, together with other initiation factors, stimulates binding of mRNA and methionyl-tRNAi to the 40S ribosome. The eIF-3 complex specifically targets and initiates translation of a subset of mRNAs involved in cell proliferation. This Drosophila persimilis (Fruit fly) protein is Eukaryotic translation initiation factor 3 subunit E (eIF3-S6).